Consider the following 182-residue polypeptide: ATP synthase subunit delta (182 aa).

Belongs to the ATPase delta chain family. As to quaternary structure, F-type ATPases have 2 components, F(1) - the catalytic core - and F(0) - the membrane proton channel. F(1) has five subunits: alpha(3), beta(3), gamma(1), delta(1), epsilon(1). F(0) has three main subunits: a(1), b(2) and c(10-14). The alpha and beta chains form an alternating ring which encloses part of the gamma chain. F(1) is attached to F(0) by a central stalk formed by the gamma and epsilon chains, while a peripheral stalk is formed by the delta and b chains.

Its subcellular location is the cell membrane. Functionally, f(1)F(0) ATP synthase produces ATP from ADP in the presence of a proton or sodium gradient. F-type ATPases consist of two structural domains, F(1) containing the extramembraneous catalytic core and F(0) containing the membrane proton channel, linked together by a central stalk and a peripheral stalk. During catalysis, ATP synthesis in the catalytic domain of F(1) is coupled via a rotary mechanism of the central stalk subunits to proton translocation. Its function is as follows. This protein is part of the stalk that links CF(0) to CF(1). It either transmits conformational changes from CF(0) to CF(1) or is implicated in proton conduction. This chain is ATP synthase subunit delta, found in Desulforudis audaxviator (strain MP104C).